Consider the following 450-residue polypeptide: MTIHKKQNIGVFGFGKTGISVYEELQSKCNIIAYDDLEVNRNKFEELFSKNYIIPISDIKWQNLDKIVLSPGIPLTHEIVKIAKNFNIPITSDIDLFFEKSKGLNLLAVTGTNGKSTTTALISHILSDNGLDYPVAGNIGVPVLQAKASKGGYVLELSSFQLDLVKTFAAKIAVLLNITPDHLDRHENMEGYITAKSKIFDRMDKDSYGIINIDNDYCHEIFTNLQQKHHIKLIPFSVTKILEKGISIVNDIITDNFFEHISFKLISNKSLQGIHNSENIAASYAVARIIGLEPVKIIESISSFQGLPHRMQYLGNIDDINFYNDSKASNAIAAVQSIKALDNIYWLAGGIAKEGGIEEIKPYFSKIKKAYFYGQAKEMFANTAKDIIDFVICDDLKQAFELAYKDACKDNEKEKNILLAPCCSSYDQFKNFEERGELFIRLYNTLNLCL.

Residue 111-117 (GTNGKST) coordinates ATP.

Belongs to the MurCDEF family.

The protein resides in the cytoplasm. The enzyme catalyses UDP-N-acetyl-alpha-D-muramoyl-L-alanine + D-glutamate + ATP = UDP-N-acetyl-alpha-D-muramoyl-L-alanyl-D-glutamate + ADP + phosphate + H(+). The protein operates within cell wall biogenesis; peptidoglycan biosynthesis. Cell wall formation. Catalyzes the addition of glutamate to the nucleotide precursor UDP-N-acetylmuramoyl-L-alanine (UMA). This Rickettsia bellii (strain RML369-C) protein is UDP-N-acetylmuramoylalanine--D-glutamate ligase.